Reading from the N-terminus, the 304-residue chain is MRMIEQAPKTYCGFIAIVGRPNVGKSTLLNKILGQKISITSRKAQTTRHRIVGIQTEEQYQAIYVDTPGLHIEEKRAINRLMNRAASSAIGDVDLIIFVVEGTKWTDDDEMVLNKLRTAKAPVVLAINKVDNIKEKDELLPHITALSQKFDFAEILPISAQRGKNVHILQKIVRKSLREGVHHFPEEYVTDRSQRFMASEIIREKLMRFTGEELPYSVTVEIEQFKLNERGTYEINGLILVEREGQKKMVIGAKGQKIKTIGIEARADMERLFDNKVHLELWVKVKAGWADDERALRSLGYMDE.

Positions 11–179 (YCGFIAIVGR…QKIVRKSLRE (169 aa)) constitute an Era-type G domain. The segment at 19–26 (GRPNVGKS) is G1. 19–26 (GRPNVGKS) is a GTP binding site. The segment at 45-49 (QTTRH) is G2. The G3 stretch occupies residues 66-69 (DTPG). GTP contacts are provided by residues 66–70 (DTPGL) and 128–131 (NKVD). Residues 128–131 (NKVD) form a G4 region. Positions 158 to 160 (ISA) are G5. The KH type-2 domain maps to 210 to 287 (TGEELPYSVT…HLELWVKVKA (78 aa)).

The protein belongs to the TRAFAC class TrmE-Era-EngA-EngB-Septin-like GTPase superfamily. Era GTPase family. As to quaternary structure, monomer.

Its subcellular location is the cytoplasm. It localises to the cell inner membrane. In terms of biological role, an essential GTPase that binds both GDP and GTP, with rapid nucleotide exchange. Plays a role in 16S rRNA processing and 30S ribosomal subunit biogenesis and possibly also in cell cycle regulation and energy metabolism. The polypeptide is GTPase Era (Haemophilus ducreyi (strain 35000HP / ATCC 700724)).